The following is a 248-amino-acid chain: ATP synthase subunit a, chloroplastic (248 aa).

Transmembrane regions (helical) follow at residues 96 to 116 (VPFI…GALL), 135 to 155 (INTT…AGLY), 200 to 220 (LVVA…MMLL), and 221 to 241 (GLFT…AYIG).

This sequence belongs to the ATPase A chain family. As to quaternary structure, F-type ATPases have 2 components, CF(1) - the catalytic core - and CF(0) - the membrane proton channel. CF(1) has five subunits: alpha(3), beta(3), gamma(1), delta(1), epsilon(1). CF(0) has four main subunits: a, b, b' and c.

The protein resides in the plastid. Its subcellular location is the chloroplast thylakoid membrane. Key component of the proton channel; it plays a direct role in the translocation of protons across the membrane. This Adiantum capillus-veneris (Maidenhair fern) protein is ATP synthase subunit a, chloroplastic.